Consider the following 455-residue polypeptide: Chromosomal replication initiator protein DnaA (455 aa).

Residues 1-73 (MTISPQYIWN…LEEVETIVGY (73 aa)) are domain I, interacts with DnaA modulators. Positions 73-114 (YPIAVKLTTSQEQNLRIVDKNKDNLSSTKLQNKRQQESPKLN) are domain II. Residues 115-331 (QLNPRYNFSR…GALIRAVTYI (217 aa)) form a domain III, AAA+ region region. ATP is bound by residues Gly-159, Gly-161, Lys-162, and Thr-163. The segment at 332-455 (SISGLSMTVE…RINIASRNQN (124 aa)) is domain IV, binds dsDNA.

The protein belongs to the DnaA family. Oligomerizes as a right-handed, spiral filament on DNA at oriC.

The protein resides in the cytoplasm. In terms of biological role, plays an essential role in the initiation and regulation of chromosomal replication. ATP-DnaA binds to the origin of replication (oriC) to initiate formation of the DNA replication initiation complex once per cell cycle. Binds the DnaA box (a 9 base pair repeat at the origin) and separates the double-stranded (ds)DNA. Forms a right-handed helical filament on oriC DNA; dsDNA binds to the exterior of the filament while single-stranded (ss)DNA is stabiized in the filament's interior. The ATP-DnaA-oriC complex binds and stabilizes one strand of the AT-rich DNA unwinding element (DUE), permitting loading of DNA polymerase. After initiation quickly degrades to an ADP-DnaA complex that is not apt for DNA replication. Binds acidic phospholipids. The protein is Chromosomal replication initiator protein DnaA of Crocosphaera subtropica (strain ATCC 51142 / BH68) (Cyanothece sp. (strain ATCC 51142)).